Here is a 408-residue protein sequence, read N- to C-terminus: Imidazolonepropionase (408 aa).

Residues His-73 and His-75 each contribute to the Fe(3+) site. Zn(2+) contacts are provided by His-73 and His-75. Residues Arg-82, Tyr-145, and His-178 each contribute to the 4-imidazolone-5-propanoate site. Tyr-145 is a binding site for N-formimidoyl-L-glutamate. His-243 contacts Fe(3+). His-243 is a binding site for Zn(2+). Gln-246 contacts 4-imidazolone-5-propanoate. Residue Asp-318 participates in Fe(3+) binding. Position 318 (Asp-318) interacts with Zn(2+). Asn-320 and Gly-322 together coordinate N-formimidoyl-L-glutamate. Residue Ser-323 coordinates 4-imidazolone-5-propanoate.

This sequence belongs to the metallo-dependent hydrolases superfamily. HutI family. Zn(2+) serves as cofactor. Fe(3+) is required as a cofactor.

Its subcellular location is the cytoplasm. The enzyme catalyses 4-imidazolone-5-propanoate + H2O = N-formimidoyl-L-glutamate. The protein operates within amino-acid degradation; L-histidine degradation into L-glutamate; N-formimidoyl-L-glutamate from L-histidine: step 3/3. Catalyzes the hydrolytic cleavage of the carbon-nitrogen bond in imidazolone-5-propanoate to yield N-formimidoyl-L-glutamate. It is the third step in the universal histidine degradation pathway. This chain is Imidazolonepropionase, found in Shewanella woodyi (strain ATCC 51908 / MS32).